A 332-amino-acid chain; its full sequence is Ornithine carbamoyltransferase, catabolic (332 aa).

Carbamoyl phosphate is bound by residues 60–63 (STRT), Gln87, Arg111, and 138–141 (HPTQ). L-ornithine-binding positions include Asn170, Asp230, and 234–235 (SM). Carbamoyl phosphate contacts are provided by residues 271–272 (CL) and Arg316.

The protein belongs to the aspartate/ornithine carbamoyltransferase superfamily. OTCase family.

The protein localises to the cytoplasm. It carries out the reaction carbamoyl phosphate + L-ornithine = L-citrulline + phosphate + H(+). The protein operates within amino-acid degradation; L-arginine degradation via ADI pathway; carbamoyl phosphate from L-arginine: step 2/2. Reversibly catalyzes the transfer of the carbamoyl group from carbamoyl phosphate (CP) to the N(epsilon) atom of ornithine (ORN) to produce L-citrulline. The protein is Ornithine carbamoyltransferase, catabolic of Bacillus thuringiensis subsp. konkukian (strain 97-27).